We begin with the raw amino-acid sequence, 432 residues long: Probable protein phosphatase 2C 75 (432 aa).

One can recognise a PPM-type phosphatase domain in the interval 44-356 (VACLFTRQGK…DDCAVVCLFL (313 aa)). 4 residues coordinate Mn(2+): D80, G81, D301, and D347. The segment at 372-408 (SPRMPALSGITRPNSKRVTPDDVDDGSDSNVSGDERS) is disordered.

Belongs to the PP2C family. Mg(2+) is required as a cofactor. Requires Mn(2+) as cofactor.

The catalysed reaction is O-phospho-L-seryl-[protein] + H2O = L-seryl-[protein] + phosphate. It catalyses the reaction O-phospho-L-threonyl-[protein] + H2O = L-threonyl-[protein] + phosphate. In Oryza sativa subsp. japonica (Rice), this protein is Probable protein phosphatase 2C 75.